A 503-amino-acid chain; its full sequence is ATP synthase subunit alpha (503 aa).

170–177 (GDRQTGKT) is an ATP binding site.

The protein belongs to the ATPase alpha/beta chains family. F-type ATPases have 2 components, CF(1) - the catalytic core - and CF(0) - the membrane proton channel. CF(1) has five subunits: alpha(3), beta(3), gamma(1), delta(1), epsilon(1). CF(0) has three main subunits: a(1), b(2) and c(9-12). The alpha and beta chains form an alternating ring which encloses part of the gamma chain. CF(1) is attached to CF(0) by a central stalk formed by the gamma and epsilon chains, while a peripheral stalk is formed by the delta and b chains.

It is found in the cell inner membrane. The catalysed reaction is ATP + H2O + 4 H(+)(in) = ADP + phosphate + 5 H(+)(out). Produces ATP from ADP in the presence of a proton gradient across the membrane. The alpha chain is a regulatory subunit. In Geobacter sulfurreducens (strain ATCC 51573 / DSM 12127 / PCA), this protein is ATP synthase subunit alpha.